Reading from the N-terminus, the 87-residue chain is MKKNIHPDYHPVVFKDASTGHQFLTRSTATSDRTVEWEDGNEYPLIVVDVTSESHPFWTGAQRVMDTAGRVEKFQRRYGNRLRRAKK.

The protein belongs to the bacterial ribosomal protein bL31 family. Type B subfamily. As to quaternary structure, part of the 50S ribosomal subunit.

The chain is Large ribosomal subunit protein bL31B from Corynebacterium kroppenstedtii (strain DSM 44385 / JCM 11950 / CIP 105744 / CCUG 35717).